The sequence spans 89 residues: uncharacterized protein (89 aa).

Residues 1–19 (MQLTKTQFVRCVFLLLANS) form the signal peptide.

This is an uncharacterized protein from Sulfolobus islandicus filamentous virus (isolate Iceland/Hveragerdi) (SIFV).